Here is a 360-residue protein sequence, read N- to C-terminus: Archaemetzincin-2 (360 aa).

His254 is a Zn(2+) binding site. The active-site Proton acceptor is Glu255. Zn(2+) contacts are provided by His258, His264, Cys265, Cys270, Cys289, and Cys292.

This sequence belongs to the peptidase M54 family. Requires Zn(2+) as cofactor.

Functionally, probable zinc metalloprotease. This Macaca fascicularis (Crab-eating macaque) protein is Archaemetzincin-2 (AMZ2).